The chain runs to 257 residues: MDIPSLSPYAFKFGPIAVHWYGIFMAISIAVGGYYLYKQATKLNYDEDFLLNLLMIVVIFGVIGARLMFVLANYPEWFVKDPVQVFKIYEGGLSWHGAVLGGFLAGLYYCRKKGVRINPLEDFAVVGLALGNMLVRVGNIFNHEVLGRPTEFFFGRWPAQLVGVAIGAFLLIRYFYVQKKHMPDGYQFWSFIFYYQLLRGVFEETVKDVPLVWPVYLNEEWGIGLFTMTQVATPFILILAYWMIKRVLNDPNRQYYD.

7 consecutive transmembrane segments (helical) span residues 13–33, 49–69, 88–108, 123–143, 152–172, 186–202, and 223–243; these read FGPIAVHWYGIFMAISIAVGG, FLLNLLMIVVIFGVIGARLMF, IYEGGLSWHGAVLGGFLAGLY, FAVVGLALGNMLVRVGNIFNH, FFFGRWPAQLVGVAIGAFLLI, YQFWSFIFYYQLLRGVF, and IGLFTMTQVATPFILILAYWM. Arginine 136 provides a ligand contact to a 1,2-diacyl-sn-glycero-3-phospho-(1'-sn-glycerol).

The protein belongs to the Lgt family.

The protein localises to the cell membrane. It carries out the reaction L-cysteinyl-[prolipoprotein] + a 1,2-diacyl-sn-glycero-3-phospho-(1'-sn-glycerol) = an S-1,2-diacyl-sn-glyceryl-L-cysteinyl-[prolipoprotein] + sn-glycerol 1-phosphate + H(+). It participates in protein modification; lipoprotein biosynthesis (diacylglyceryl transfer). In terms of biological role, catalyzes the transfer of the diacylglyceryl group from phosphatidylglycerol to the sulfhydryl group of the N-terminal cysteine of a prolipoprotein, the first step in the formation of mature lipoproteins. This Caldanaerobacter subterraneus subsp. tengcongensis (strain DSM 15242 / JCM 11007 / NBRC 100824 / MB4) (Thermoanaerobacter tengcongensis) protein is Phosphatidylglycerol--prolipoprotein diacylglyceryl transferase.